The sequence spans 189 residues: uncharacterized protein (189 aa).

A run of 3 helical transmembrane segments spans residues 2–22 (LVVV…HHLL), 93–113 (ILFY…YFIL), and 116–136 (FYST…LHTL).

The protein resides in the membrane. This is an uncharacterized protein from Schizosaccharomyces pombe (strain 972 / ATCC 24843) (Fission yeast).